A 402-amino-acid polypeptide reads, in one-letter code: Serine/threonine transporter SstT (402 aa).

A run of 9 helical transmembrane segments spans residues 19-39 (IGVV…AIGL), 43-63 (LFVG…VISA), 86-106 (TFAA…TLIL), 138-158 (AITE…GLAM), 179-199 (VVKW…FTSI), 212-232 (LLIL…NPII), 287-307 (IPLG…ILTL), 327-347 (VVAA…LLLI), and 354-374 (FGIS…VGVI).

It belongs to the dicarboxylate/amino acid:cation symporter (DAACS) (TC 2.A.23) family.

The protein localises to the cell membrane. The enzyme catalyses L-serine(in) + Na(+)(in) = L-serine(out) + Na(+)(out). The catalysed reaction is L-threonine(in) + Na(+)(in) = L-threonine(out) + Na(+)(out). In terms of biological role, involved in the import of serine and threonine into the cell, with the concomitant import of sodium (symport system). In Streptococcus agalactiae serotype III (strain NEM316), this protein is Serine/threonine transporter SstT.